Consider the following 570-residue polypeptide: Peptidyl-prolyl cis-trans isomerase CYP63 (570 aa).

One can recognise a PPIase cyclophilin-type domain in the interval 10-174; sequence FLDVSIGGDP…SPVKIIDCGE (165 aa). Residues 180–570 are disordered; it reads AHDAAEREKG…GKRGLVSYAD (391 aa). The segment covering 203-219 has biased composition (basic and acidic residues); it reads VSDREAKETRKKESNEK. Composition is skewed to low complexity over residues 229 to 238 and 246 to 259; these read SSDSYSSSSD and EAYS…SSSS. Over residues 262–292 the composition is skewed to basic residues; sequence KHRKRKSTTRHKGRRGERKSKGRSGKKKARP. Positions 297-309 are enriched in low complexity; sequence STNSSSDTESSSS. The segment covering 323–339 has biased composition (basic and acidic residues); sequence VKVDNADQHANLDDSVK. At S340 the chain carries Phosphoserine. A compositionally biased stretch (basic residues) spans 340-351; it reads SRSRSPIRRRNQ. The segment covering 352–365 has biased composition (low complexity); sequence NSRSKSPSRSPVRV. Basic and acidic residues-rich tracts occupy residues 387 to 397 and 437 to 467; these read SPREKPTEETV and SPPR…ERSP. Over residues 468-490 the composition is skewed to basic residues; sequence RGRFRSPPRRRSPPRYNRRRRST. A compositionally biased stretch (basic and acidic residues) spans 495–505; the sequence is DGYRRRLRDGS. A compositionally biased stretch (basic residues) spans 509 to 523; it reads SPRHRSRSQSPRKRQ. Over residues 546-555 the composition is skewed to low complexity; it reads SPAESLSPSH.

This sequence belongs to the cyclophilin-type PPIase family. Interacts with SNRNP35, RNU1, SCL28, SCL30, SR30 and SR34. The binding to SR34 is phosphorylation-dependent. Ubiquitous.

The protein localises to the nucleus. The protein resides in the nucleoplasm. Its subcellular location is the nucleus speckle. It carries out the reaction [protein]-peptidylproline (omega=180) = [protein]-peptidylproline (omega=0). In terms of biological role, PPIases accelerate the folding of proteins. It catalyzes the cis-trans isomerization of proline imidic peptide bonds in oligopeptides. May be implicated in the folding, transport, and assembly of proteins. Probably involved in early steps of spliceosomal assembly. This Arabidopsis thaliana (Mouse-ear cress) protein is Peptidyl-prolyl cis-trans isomerase CYP63 (CYP63).